Reading from the N-terminus, the 299-residue chain is Bifunctional protein FolD (299 aa).

Residues 166–168 (GRS), Ser191, and Ile232 contribute to the NADP(+) site.

The protein belongs to the tetrahydrofolate dehydrogenase/cyclohydrolase family. Homodimer.

It catalyses the reaction (6R)-5,10-methylene-5,6,7,8-tetrahydrofolate + NADP(+) = (6R)-5,10-methenyltetrahydrofolate + NADPH. The catalysed reaction is (6R)-5,10-methenyltetrahydrofolate + H2O = (6R)-10-formyltetrahydrofolate + H(+). Its pathway is one-carbon metabolism; tetrahydrofolate interconversion. Catalyzes the oxidation of 5,10-methylenetetrahydrofolate to 5,10-methenyltetrahydrofolate and then the hydrolysis of 5,10-methenyltetrahydrofolate to 10-formyltetrahydrofolate. The chain is Bifunctional protein FolD from Anaplasma marginale (strain St. Maries).